We begin with the raw amino-acid sequence, 255 residues long: L-erythrulose-1-phosphate isomerase (255 aa).

Residue H98 is the Electrophile of the active site. E171 serves as the catalytic Proton acceptor. G177 and S214 together coordinate substrate.

This sequence belongs to the triosephosphate isomerase family. As to quaternary structure, homodimer.

Its subcellular location is the cytoplasm. It catalyses the reaction L-erythrulose 1-phosphate = D-erythrulose 4-phosphate. Its pathway is carbohydrate metabolism; erythritol degradation. Its function is as follows. Catalyzes the isomerization of D-erythrulose-4P to L-erythrulose-1P. This Rhizobium meliloti (strain 1021) (Ensifer meliloti) protein is L-erythrulose-1-phosphate isomerase.